The primary structure comprises 535 residues: Sterol 26-hydroxylase, mitochondrial (535 aa).

Residues 1–36 (MAALGCARLRWALLGPRVAGCGLCPQGARAKAAIPT) constitute a mitochondrion transit peptide. Lysine 286 carries the N6-acetyllysine modification. The tract at residues 387 to 401 (PLLKAVLKETLRLYP) is sterol-binding. Heme is bound at residue cysteine 480. Lysine 524 bears the N6-acetyllysine mark.

Belongs to the cytochrome P450 family. As to quaternary structure, interacts with HSP70; this interaction is required for initial targeting to mitochondria. The cofactor is heme. As to expression, expressed in all tissues tested. Highest expression in liver and duodenum, followed by adrenal gland and lung. Low expression in kidney and spleen.

The protein resides in the mitochondrion inner membrane. The enzyme catalyses 5beta-cholestane-3alpha,7alpha,12alpha-triol + 6 reduced [adrenodoxin] + 3 O2 + 5 H(+) = (25R)-3alpha,7alpha,12alpha-trihydroxy-5beta-cholestan-26-oate + 6 oxidized [adrenodoxin] + 4 H2O. It carries out the reaction cholestanol + 2 reduced [adrenodoxin] + O2 + 2 H(+) = (25R)-26-hydroxycholestanol + 2 oxidized [adrenodoxin] + H2O. The catalysed reaction is (25R)-3beta-hydroxycholest-5-en-7-one-26-al + 2 reduced [adrenodoxin] + O2 + H(+) = (25R)-3beta-hydroxycholest-5-en-7-one-26-oate + 2 oxidized [adrenodoxin] + H2O. It catalyses the reaction (25R)-3beta,26-dihydroxycholest-5-en-7-one + 2 reduced [adrenodoxin] + O2 + 2 H(+) = (25R)-3beta-hydroxycholest-5-en-7-one-26-al + 2 oxidized [adrenodoxin] + 2 H2O. The enzyme catalyses 7-oxocholesterol + 2 reduced [adrenodoxin] + O2 + 2 H(+) = (25R)-3beta,26-dihydroxycholest-5-en-7-one + 2 oxidized [adrenodoxin] + H2O. It carries out the reaction calciol + 2 reduced [adrenodoxin] + O2 + 2 H(+) = calcidiol + 2 oxidized [adrenodoxin] + H2O. The catalysed reaction is (25R)-5beta-cholestane-3alpha,7alpha,12alpha,26-tetrol + 2 reduced [adrenodoxin] + O2 + 2 H(+) = (25R)-3alpha,7alpha,12alpha-trihydroxy-5beta-cholestan-26-al + 2 oxidized [adrenodoxin] + 2 H2O. It catalyses the reaction 2 reduced [adrenodoxin] + cholesterol + O2 + 2 H(+) = (25R)-cholest-5-ene-3beta,26-diol + 2 oxidized [adrenodoxin] + H2O. The enzyme catalyses (25R)-3beta,4beta-dihydroxycholest-5-en-26-al + 2 reduced [adrenodoxin] + O2 + H(+) = (25R)-3beta,4beta-dihydroxycholest-5-en-26-oate + 2 oxidized [adrenodoxin] + H2O. It carries out the reaction (25R)-4beta,26-dihydroxycholesterol + 2 reduced [adrenodoxin] + O2 + 2 H(+) = (25R)-3beta,4beta-dihydroxycholest-5-en-26-al + 2 oxidized [adrenodoxin] + 2 H2O. The catalysed reaction is 4beta-hydroxycholesterol + 2 reduced [adrenodoxin] + O2 + 2 H(+) = (25R)-4beta,26-dihydroxycholesterol + 2 oxidized [adrenodoxin] + H2O. It catalyses the reaction (25R)-3beta-hydroxy-5-cholesten-26-al + 2 reduced [adrenodoxin] + O2 + H(+) = (25R)-3beta-hydroxy-5-cholestenoate + 2 oxidized [adrenodoxin] + H2O. The enzyme catalyses (25R)-cholest-5-ene-3beta,26-diol + 2 reduced [adrenodoxin] + O2 + 2 H(+) = (25R)-3beta-hydroxy-5-cholesten-26-al + 2 oxidized [adrenodoxin] + 2 H2O. It carries out the reaction (25R)-3alpha,7alpha,12alpha-trihydroxy-5beta-cholestan-26-al + 2 reduced [adrenodoxin] + O2 + H(+) = (25R)-3alpha,7alpha,12alpha-trihydroxy-5beta-cholestan-26-oate + 2 oxidized [adrenodoxin] + H2O. The catalysed reaction is 5beta-cholestane-3alpha,7alpha,12alpha-triol + 2 reduced [adrenodoxin] + O2 + 2 H(+) = (25R)-5beta-cholestane-3alpha,7alpha,12alpha,26-tetrol + 2 oxidized [adrenodoxin] + H2O. Its pathway is hormone biosynthesis; cholecalciferol biosynthesis. The protein operates within steroid metabolism; cholesterol degradation. It functions in the pathway lipid metabolism; bile acid biosynthesis. Its function is as follows. Cytochrome P450 monooxygenase that catalyzes regio- and stereospecific hydroxylation of cholesterol and its derivatives. Hydroxylates (with R stereochemistry) the terminal methyl group of cholesterol side-chain in a three step reaction to yield at first a C26 alcohol, then a C26 aldehyde and finally a C26 acid. Regulates cholesterol homeostasis by catalyzing the conversion of excess cholesterol to bile acids via both the 'neutral' (classic) and the 'acid' (alternative) pathways. May also regulate cholesterol homeostasis via generation of active oxysterols, which act as ligands for NR1H2 and NR1H3 nuclear receptors, modulating the transcription of genes involved in lipid metabolism. Plays a role in cholestanol metabolism in the cerebellum. Similarly to cholesterol, hydroxylates cholestanol and may facilitate sterol diffusion through the blood-brain barrier to the systemic circulation for further degradation. Also hydroxylates retinal 7-ketocholesterol, a noxious oxysterol with pro-inflammatory and pro-apoptotic effects, and may play a role in its elimination from the retinal pigment epithelium. May play a redundant role in vitamin D biosynthesis. Catalyzes 25-hydroxylation of vitamin D3 that is required for its conversion to a functionally active form. The polypeptide is Sterol 26-hydroxylase, mitochondrial (CYP27A1) (Oryctolagus cuniculus (Rabbit)).